The primary structure comprises 598 residues: Elongation factor 4 (598 aa).

In terms of domain architecture, tr-type G spans 2-183 (KNIRNFCIIA…AIINRVPAPS (182 aa)). GTP-binding positions include 14–19 (DHGKST) and 130–133 (NKVD).

The protein belongs to the TRAFAC class translation factor GTPase superfamily. Classic translation factor GTPase family. LepA subfamily.

It is found in the cell inner membrane. It carries out the reaction GTP + H2O = GDP + phosphate + H(+). Its function is as follows. Required for accurate and efficient protein synthesis under certain stress conditions. May act as a fidelity factor of the translation reaction, by catalyzing a one-codon backward translocation of tRNAs on improperly translocated ribosomes. Back-translocation proceeds from a post-translocation (POST) complex to a pre-translocation (PRE) complex, thus giving elongation factor G a second chance to translocate the tRNAs correctly. Binds to ribosomes in a GTP-dependent manner. The polypeptide is Elongation factor 4 (Christiangramia forsetii (strain DSM 17595 / CGMCC 1.15422 / KT0803) (Gramella forsetii)).